The chain runs to 334 residues: GTP 3',8-cyclase (334 aa).

The region spanning 8–244 (RYGRPLRDLR…GEVAQRHAFA (237 aa)) is the Radical SAM core domain. R17 is a binding site for GTP. [4Fe-4S] cluster contacts are provided by C24 and C28. An S-adenosyl-L-methionine-binding site is contributed by Y30. [4Fe-4S] cluster is bound at residue C31. R70 contacts GTP. An S-adenosyl-L-methionine-binding site is contributed by G74. T101 serves as a coordination point for GTP. S125 is a binding site for S-adenosyl-L-methionine. Residue K163 coordinates GTP. M197 contacts S-adenosyl-L-methionine. [4Fe-4S] cluster-binding residues include C261 and C264. GTP is bound at residue 266 to 268 (RAR). A [4Fe-4S] cluster-binding site is contributed by C278.

This sequence belongs to the radical SAM superfamily. MoaA family. In terms of assembly, monomer and homodimer. The cofactor is [4Fe-4S] cluster.

The catalysed reaction is GTP + AH2 + S-adenosyl-L-methionine = (8S)-3',8-cyclo-7,8-dihydroguanosine 5'-triphosphate + 5'-deoxyadenosine + L-methionine + A + H(+). It participates in cofactor biosynthesis; molybdopterin biosynthesis. Functionally, catalyzes the cyclization of GTP to (8S)-3',8-cyclo-7,8-dihydroguanosine 5'-triphosphate. In Xanthomonas axonopodis pv. citri (strain 306), this protein is GTP 3',8-cyclase.